The primary structure comprises 344 residues: Holliday junction branch migration complex subunit RuvB (344 aa).

The tract at residues 1-183 (MPDRELISGD…FGLVLRLDPY (183 aa)) is large ATPase domain (RuvB-L). Residues leucine 22, arginine 23, glycine 64, lysine 67, threonine 68, threonine 69, 130 to 132 (EDF), arginine 173, tyrosine 183, and arginine 220 contribute to the ATP site. Threonine 68 lines the Mg(2+) pocket. The small ATPAse domain (RuvB-S) stretch occupies residues 184–254 (NTEELKAIVK…VAQTALNLLD (71 aa)). Positions 257 to 344 (RYGLDEIDQK…EGDHPSLFEA (88 aa)) are head domain (RuvB-H). Positions 312 and 317 each coordinate DNA.

This sequence belongs to the RuvB family. Homohexamer. Forms an RuvA(8)-RuvB(12)-Holliday junction (HJ) complex. HJ DNA is sandwiched between 2 RuvA tetramers; dsDNA enters through RuvA and exits via RuvB. An RuvB hexamer assembles on each DNA strand where it exits the tetramer. Each RuvB hexamer is contacted by two RuvA subunits (via domain III) on 2 adjacent RuvB subunits; this complex drives branch migration. In the full resolvosome a probable DNA-RuvA(4)-RuvB(12)-RuvC(2) complex forms which resolves the HJ.

It localises to the cytoplasm. The catalysed reaction is ATP + H2O = ADP + phosphate + H(+). Functionally, the RuvA-RuvB-RuvC complex processes Holliday junction (HJ) DNA during genetic recombination and DNA repair, while the RuvA-RuvB complex plays an important role in the rescue of blocked DNA replication forks via replication fork reversal (RFR). RuvA specifically binds to HJ cruciform DNA, conferring on it an open structure. The RuvB hexamer acts as an ATP-dependent pump, pulling dsDNA into and through the RuvAB complex. RuvB forms 2 homohexamers on either side of HJ DNA bound by 1 or 2 RuvA tetramers; 4 subunits per hexamer contact DNA at a time. Coordinated motions by a converter formed by DNA-disengaged RuvB subunits stimulates ATP hydrolysis and nucleotide exchange. Immobilization of the converter enables RuvB to convert the ATP-contained energy into a lever motion, pulling 2 nucleotides of DNA out of the RuvA tetramer per ATP hydrolyzed, thus driving DNA branch migration. The RuvB motors rotate together with the DNA substrate, which together with the progressing nucleotide cycle form the mechanistic basis for DNA recombination by continuous HJ branch migration. Branch migration allows RuvC to scan DNA until it finds its consensus sequence, where it cleaves and resolves cruciform DNA. This Solibacter usitatus (strain Ellin6076) protein is Holliday junction branch migration complex subunit RuvB.